A 344-amino-acid polypeptide reads, in one-letter code: UDP-3-O-acylglucosamine N-acyltransferase (344 aa).

Catalysis depends on His-248, which acts as the Proton acceptor.

Belongs to the transferase hexapeptide repeat family. LpxD subfamily. As to quaternary structure, homotrimer.

It carries out the reaction a UDP-3-O-[(3R)-3-hydroxyacyl]-alpha-D-glucosamine + a (3R)-hydroxyacyl-[ACP] = a UDP-2-N,3-O-bis[(3R)-3-hydroxyacyl]-alpha-D-glucosamine + holo-[ACP] + H(+). It functions in the pathway bacterial outer membrane biogenesis; LPS lipid A biosynthesis. Functionally, catalyzes the N-acylation of UDP-3-O-acylglucosamine using 3-hydroxyacyl-ACP as the acyl donor. Is involved in the biosynthesis of lipid A, a phosphorylated glycolipid that anchors the lipopolysaccharide to the outer membrane of the cell. The polypeptide is UDP-3-O-acylglucosamine N-acyltransferase (Prochlorococcus marinus subsp. pastoris (strain CCMP1986 / NIES-2087 / MED4)).